Consider the following 54-residue polypeptide: Photoreceptor disk component PRCD (54 aa).

Residue Cys2 is the site of S-palmitoyl cysteine attachment. The tract at residues 24 to 54 (QPEPNGVDGAVSGSSLETDLQSSGREKEPLK) is disordered. The segment covering 35-46 (SGSSLETDLQSS) has biased composition (polar residues).

It belongs to the PRCD family. In terms of assembly, interacts with RHO/rhodopsin; the interaction promotes PRCD stability. Post-translationally, palmitoylated at Cys-2. Palmitoylation is essential for protein stability and trafficking to the photoreceptor outer segment, but does not appear to be essential for membrane localization. Probably palmitoylated by ZDHHC3. In terms of processing, phosphorylated. As to expression, expressed in retina (at protein level).

It localises to the cell projection. It is found in the cilium. Its subcellular location is the photoreceptor outer segment. The protein localises to the membrane. The protein resides in the endoplasmic reticulum. It localises to the golgi apparatus. In terms of biological role, involved in vision. In Bos taurus (Bovine), this protein is Photoreceptor disk component PRCD.